We begin with the raw amino-acid sequence, 298 residues long: Flavin-dependent thymidylate synthase (298 aa).

A ThyX domain is found at 41 to 251; it reads GFVRLVDYMG…PLTYAAFVEY (211 aa). Residues Thr-87, 110 to 112, and Glu-118 contribute to the FAD site; that span reads RHR. DUMP is bound by residues 107 to 110, 118 to 122, and Arg-190; these read QWVR and EYSAR. A ThyX motif motif is present at residues 110–120; it reads RHRTANVNEYS. Residues 206-208 and His-212 contribute to the FAD site; that span reads DLH. Arg-217 is a binding site for dUMP. Arg-217 (involved in ionization of N3 of dUMP, leading to its activation) is an active-site residue.

This sequence belongs to the thymidylate synthase ThyX family. As to quaternary structure, homotetramer. FAD serves as cofactor.

It catalyses the reaction dUMP + (6R)-5,10-methylene-5,6,7,8-tetrahydrofolate + NADPH + H(+) = dTMP + (6S)-5,6,7,8-tetrahydrofolate + NADP(+). It functions in the pathway pyrimidine metabolism; dTTP biosynthesis. Its function is as follows. Catalyzes the reductive methylation of 2'-deoxyuridine-5'-monophosphate (dUMP) to 2'-deoxythymidine-5'-monophosphate (dTMP) while utilizing 5,10-methylenetetrahydrofolate (mTHF) as the methyl donor, and NADPH and FADH(2) as the reductant. The polypeptide is Flavin-dependent thymidylate synthase (Ehrlichia ruminantium (strain Welgevonden)).